A 231-amino-acid chain; its full sequence is Urease accessory protein UreF (231 aa).

The protein belongs to the UreF family. In terms of assembly, ureD, UreF and UreG form a complex that acts as a GTP-hydrolysis-dependent molecular chaperone, activating the urease apoprotein by helping to assemble the nickel containing metallocenter of UreC. The UreE protein probably delivers the nickel.

The protein resides in the cytoplasm. In terms of biological role, required for maturation of urease via the functional incorporation of the urease nickel metallocenter. The sequence is that of Urease accessory protein UreF from Marinobacter nauticus (strain ATCC 700491 / DSM 11845 / VT8) (Marinobacter aquaeolei).